Reading from the N-terminus, the 439-residue chain is GTPase Der (439 aa).

EngA-type G domains follow at residues 4–169 and 177–352; these read AMVS…PQEE and IKIA…EEYN. GTP is bound by residues 10-17, 57-61, 120-123, 183-190, 230-234, and 295-298; these read GRPNVGKS, DTGGL, NKVD, GKPNVGKS, DTAGI, and NKWD. One can recognise a KH-like domain in the interval 353 to 437; the sequence is KRITTGLLNN…PIVISTKKRG (85 aa).

Belongs to the TRAFAC class TrmE-Era-EngA-EngB-Septin-like GTPase superfamily. EngA (Der) GTPase family. In terms of assembly, associates with the 50S ribosomal subunit.

Functionally, GTPase that plays an essential role in the late steps of ribosome biogenesis. The chain is GTPase Der from Thermoanaerobacter sp. (strain X514).